The following is a 310-amino-acid chain: tRNA dimethylallyltransferase (310 aa).

12 to 19 (GPTATGKT) provides a ligand contact to ATP. 14-19 (TATGKT) is a substrate binding site. The tract at residues 37-40 (DSMM) is interaction with substrate tRNA.

The protein belongs to the IPP transferase family. In terms of assembly, monomer. It depends on Mg(2+) as a cofactor.

The enzyme catalyses adenosine(37) in tRNA + dimethylallyl diphosphate = N(6)-dimethylallyladenosine(37) in tRNA + diphosphate. Its function is as follows. Catalyzes the transfer of a dimethylallyl group onto the adenine at position 37 in tRNAs that read codons beginning with uridine, leading to the formation of N6-(dimethylallyl)adenosine (i(6)A). The polypeptide is tRNA dimethylallyltransferase (Desulforudis audaxviator (strain MP104C)).